The chain runs to 164 residues: Zinc finger protein ZAT8 (164 aa).

C2H2-type zinc fingers lie at residues 37 to 59 and 85 to 107; these read FRCK…RASH and HPCP…MRRH.

The protein localises to the nucleus. Probable transcription factor that may be involved in stress responses. The polypeptide is Zinc finger protein ZAT8 (ZAT8) (Arabidopsis thaliana (Mouse-ear cress)).